Here is a 320-residue protein sequence, read N- to C-terminus: Glutaminyl-peptide cyclotransferase (320 aa).

Residues 1–12 are compositionally biased toward basic residues; the sequence is MATRSPYKRQTK. Residues 1–22 form a disordered region; the sequence is MATRSPYKRQTKRSMIQSLPAS. Residues 1–36 lie on the Cytoplasmic side of the membrane; it reads MATRSPYKRQTKRSMIQSLPASSSASSRRRFISRKR. The helical; Signal-anchor for type II membrane protein transmembrane segment at 37–57 threads the bilayer; that stretch reads FAMMIPLALLSGAVFLFFMPF. Over 58–320 the chain is Lumenal; sequence NSWGQSSGSS…GNYIEQQCLV (263 aa). N99 and N163 each carry an N-linked (GlcNAc...) asparagine glycan.

Belongs to the plant glutaminyl-peptide cyclotransferase family. Glycosylated.

It is found in the endoplasmic reticulum membrane. The catalysed reaction is N-terminal L-glutaminyl-[peptide] = N-terminal 5-oxo-L-prolyl-[peptide] + NH4(+). Functionally, converts glutamine and N-terminal glutamyl residues in peptides to 5-oxoproline and 5-oxoproline residues. Not involved in the major pathway for 5-oxoproline production. This is Glutaminyl-peptide cyclotransferase (QCT) from Arabidopsis thaliana (Mouse-ear cress).